We begin with the raw amino-acid sequence, 187 residues long: MYLYKKNYYGYAESLLDISISENNVEKYINDCFFILSIIQNNQVLILLFKSHFVGKQEKFNIIDKIFSAKIEKILVNFLKVIAKNNLFLHYKQILLKYIKLANSHLSQTWGEIETAFPISSVMTSSFESILSKKLGKKVHLRHKINSKLISGIRIIVDNQIFENSLFSELKLLKQNLKKHLITKNDL.

Belongs to the ATPase delta chain family. As to quaternary structure, F-type ATPases have 2 components, F(1) - the catalytic core - and F(0) - the membrane proton channel. F(1) has five subunits: alpha(3), beta(3), gamma(1), delta(1), epsilon(1). F(0) has three main subunits: a(1), b(2) and c(10-14). The alpha and beta chains form an alternating ring which encloses part of the gamma chain. F(1) is attached to F(0) by a central stalk formed by the gamma and epsilon chains, while a peripheral stalk is formed by the delta and b chains.

It localises to the cell membrane. Functionally, f(1)F(0) ATP synthase produces ATP from ADP in the presence of a proton or sodium gradient. F-type ATPases consist of two structural domains, F(1) containing the extramembraneous catalytic core and F(0) containing the membrane proton channel, linked together by a central stalk and a peripheral stalk. During catalysis, ATP synthesis in the catalytic domain of F(1) is coupled via a rotary mechanism of the central stalk subunits to proton translocation. In terms of biological role, this protein is part of the stalk that links CF(0) to CF(1). It either transmits conformational changes from CF(0) to CF(1) or is implicated in proton conduction. The sequence is that of ATP synthase subunit delta from Mesomycoplasma hyopneumoniae (strain 7448) (Mycoplasma hyopneumoniae).